Reading from the N-terminus, the 241-residue chain is Ribonuclease PH (241 aa).

Residues R87 and 125–127 (GTR) contribute to the phosphate site.

This sequence belongs to the RNase PH family. In terms of assembly, homohexameric ring arranged as a trimer of dimers.

The enzyme catalyses tRNA(n+1) + phosphate = tRNA(n) + a ribonucleoside 5'-diphosphate. Phosphorolytic 3'-5' exoribonuclease that plays an important role in tRNA 3'-end maturation. Removes nucleotide residues following the 3'-CCA terminus of tRNAs; can also add nucleotides to the ends of RNA molecules by using nucleoside diphosphates as substrates, but this may not be physiologically important. Probably plays a role in initiation of 16S rRNA degradation (leading to ribosome degradation) during starvation. This Nitrosomonas europaea (strain ATCC 19718 / CIP 103999 / KCTC 2705 / NBRC 14298) protein is Ribonuclease PH.